A 125-amino-acid chain; its full sequence is Small ribosomal subunit protein uS12 (125 aa).

Asp-89 is subject to 3-methylthioaspartic acid. A disordered region spans residues Gly-106 to Ala-125. Over residues Ser-113 to Ala-125 the composition is skewed to basic residues.

This sequence belongs to the universal ribosomal protein uS12 family. Part of the 30S ribosomal subunit. Contacts proteins S8 and S17. May interact with IF1 in the 30S initiation complex.

With S4 and S5 plays an important role in translational accuracy. Its function is as follows. Interacts with and stabilizes bases of the 16S rRNA that are involved in tRNA selection in the A site and with the mRNA backbone. Located at the interface of the 30S and 50S subunits, it traverses the body of the 30S subunit contacting proteins on the other side and probably holding the rRNA structure together. The combined cluster of proteins S8, S12 and S17 appears to hold together the shoulder and platform of the 30S subunit. In Variovorax paradoxus (strain S110), this protein is Small ribosomal subunit protein uS12.